Consider the following 54-residue polypeptide: uncharacterized protein (54 aa).

The signal sequence occupies residues 1-13; it reads MLLCFHMCQRIMW.

The protein localises to the secreted. This is an uncharacterized protein from Saccharomyces cerevisiae (strain ATCC 204508 / S288c) (Baker's yeast).